A 534-amino-acid polypeptide reads, in one-letter code: Cytochrome P450 monooxygenase CYP4 (534 aa).

A helical membrane pass occupies residues Thr46–Gly66. N-linked (GlcNAc...) asparagine glycosylation occurs at Asn220. Cys477 serves as a coordination point for heme. Asn515 is a glycosylation site (N-linked (GlcNAc...) asparagine).

The protein belongs to the cytochrome P450 family. It depends on heme as a cofactor.

It is found in the membrane. It functions in the pathway secondary metabolite biosynthesis. Functionally, cytochrome P450 monooxygenase; part of the gene cluster that mediates the biosynthesis of a tyrosine-derived cytochalasan acting as a fungal signal recognized by resistant rice plants and leads to avirulence in Pi33 resistant rice cultivars. The first step in the pathway is catalyzed by the hybrid PKS-NRPS ACE1, assisted by the enoyl reductase RAP1, that are responsible for fusion of the tyrosine precursor and the polyketide backbone. The polyketide synthase module (PKS) of ACE1 is responsible for the synthesis of the polyketide backbone and the downstream nonribosomal peptide synthetase (NRPS) amidates the carboxyl end of the polyketide with the tyrosine precursor. Because ACE1 lacks a designated enoylreductase (ER) domain, the required activity is provided the enoyl reductase RAP1. Reduction by the hydrolyase ORFZ, followed by dehydration and intra-molecular Diels-Alder cyclization by the Diels-Alderase ORF3 then yield the required isoindolone-fused macrocycle. A number of oxidative steps catalyzed by the tailoring enzymes identified within the cluster, including cytochrome P450 monooxygenases CYP1 to CYP4, the FAD-linked oxidoreductase OXR2 and the short-chain dehydrogenase/reductase OXR1, are further required to afford the final cytochalasans that confer avirulence and which have still to be identified. The monooxygenase CYP1 has been shown to be a site-selective C-18 hydroxylase whereas the function of CYP3 is the site-selective epoxidation of the C-6/C-7 olefin that is present in some intermediate compounds. Finally, SYN2 and RAP2 are not required for avirulence in Pi33 resistant rice cultivars. In Pyricularia oryzae (strain 70-15 / ATCC MYA-4617 / FGSC 8958) (Rice blast fungus), this protein is Cytochrome P450 monooxygenase CYP4.